Consider the following 85-residue polypeptide: YcgL domain-containing protein ECA2367 (85 aa).

One can recognise a YcgL domain in the interval 1-85; it reads MFCVIYRSVK…PVESLLTTPV (85 aa).

The polypeptide is YcgL domain-containing protein ECA2367 (Pectobacterium atrosepticum (strain SCRI 1043 / ATCC BAA-672) (Erwinia carotovora subsp. atroseptica)).